Consider the following 520-residue polypeptide: 2-isopropylmalate synthase (520 aa).

Residues 12-274 form the Pyruvate carboxyltransferase domain; it reads IRIFDTTLRD…DSAINTPRIV (263 aa). Positions 21, 209, 211, and 245 each coordinate Mn(2+). The tract at residues 396–520 is regulatory domain; that stretch reads RLASMTISDV…VIAGKTAAVA (125 aa).

This sequence belongs to the alpha-IPM synthase/homocitrate synthase family. LeuA type 1 subfamily. In terms of assembly, homodimer. It depends on Mn(2+) as a cofactor.

The protein resides in the cytoplasm. It catalyses the reaction 3-methyl-2-oxobutanoate + acetyl-CoA + H2O = (2S)-2-isopropylmalate + CoA + H(+). The protein operates within amino-acid biosynthesis; L-leucine biosynthesis; L-leucine from 3-methyl-2-oxobutanoate: step 1/4. In terms of biological role, catalyzes the condensation of the acetyl group of acetyl-CoA with 3-methyl-2-oxobutanoate (2-ketoisovalerate) to form 3-carboxy-3-hydroxy-4-methylpentanoate (2-isopropylmalate). The chain is 2-isopropylmalate synthase from Xanthomonas oryzae pv. oryzae (strain KACC10331 / KXO85).